The chain runs to 130 residues: Small ribosomal subunit protein uS8 (130 aa).

This sequence belongs to the universal ribosomal protein uS8 family. As to quaternary structure, part of the 30S ribosomal subunit.

Its function is as follows. One of the primary rRNA binding proteins, it binds directly to 16S rRNA central domain where it helps coordinate assembly of the platform of the 30S subunit. This Nitrosopumilus maritimus (strain SCM1) protein is Small ribosomal subunit protein uS8.